The chain runs to 510 residues: MADTYVGSIDQGTTGTRFMVFDHSGQVVANAYEKHEQIYPNPGWVEHDPIEIWENTKEVVTRGLEEAGLDAEQLEALGVTNQRETTIVWDEASGKPVHNALVWQDRRTTDRVEEIQEAGKVEMIREKTGLECDAYFSATKTEWILDNAEPLKMQASRGGDVRDRAEDGELLMGTIDSWLIQNLTGNHITDVTNASRTMLYNIRELEWDDELLEEFRVPRSMVPEVRPSSDDEYYGHTDADGFLGAEIPVAGALGDQQAAMFGQTCFDEGDAKNTYGTGSFYLMNTGTDAVASDHGLLTTIGFQMSGEPVQYALEGSIFVTGAAIEFLEDVDLINNAAQTAELASSVDSTDGVYMVPAFTGLGAPHWDGRARGTLVGMTRGTEKEHIVRATLESIGYQTRDVAEAMEADSGIETTSLRVDGGAVKNNFLCQLQSDILQTDIVRPVVDETTALGSAYAAGLAVGYWDTVDELRDNWQVDREFESEMDSADANTMYDRWDDAVERSLDWAQEE.

Position 13 (threonine 13) interacts with ADP. 2 residues coordinate ATP: threonine 13 and threonine 14. Threonine 13 provides a ligand contact to sn-glycerol 3-phosphate. Arginine 17 serves as a coordination point for ADP. Sn-glycerol 3-phosphate is bound by residues arginine 83, glutamate 84, tyrosine 135, and aspartate 255. Positions 83, 84, 135, 255, and 256 each coordinate glycerol. The ADP site is built by threonine 277, glycine 321, glycine 421, and asparagine 425. The ATP site is built by threonine 277, glycine 321, and glycine 421.

The protein belongs to the FGGY kinase family.

It catalyses the reaction glycerol + ATP = sn-glycerol 3-phosphate + ADP + H(+). The protein operates within polyol metabolism; glycerol degradation via glycerol kinase pathway; sn-glycerol 3-phosphate from glycerol: step 1/1. Its function is as follows. Key enzyme in the regulation of glycerol uptake and metabolism. Catalyzes the phosphorylation of glycerol to yield sn-glycerol 3-phosphate. The chain is Glycerol kinase from Haloquadratum walsbyi (strain DSM 16790 / HBSQ001).